The following is an 88-amino-acid chain: MAQKKAGGSSRNGRDSAGRRLGVKKFGGESVIAGNIIVRQRGTKMKAGANVGIGRDHTLFALVDGHVKFQRRAEGRVHVSVALPEAAE.

The tract at residues 1–22 (MAQKKAGGSSRNGRDSAGRRLG) is disordered.

This sequence belongs to the bacterial ribosomal protein bL27 family.

This is Large ribosomal subunit protein bL27 from Gluconobacter oxydans (strain 621H) (Gluconobacter suboxydans).